A 367-amino-acid chain; its full sequence is Large ribosomal subunit protein mL38 (367 aa).

A mitochondrion-targeting transit peptide spans 1–29 (MLRRSIHTTKILQKPNATSHIWSDFTTRP).

It belongs to the phosphatidylethanolamine-binding protein family. Mitochondrion-specific ribosomal protein mL38 subfamily. In terms of assembly, component of the mitochondrial large ribosomal subunit (mt-LSU). Mature yeast 74S mitochondrial ribosomes consist of a small (37S) and a large (54S) subunit. The 37S small subunit contains a 15S ribosomal RNA (15S mt-rRNA) and 34 different proteins. The 54S large subunit contains a 21S rRNA (21S mt-rRNA) and 46 different proteins.

The protein localises to the mitochondrion. Component of the mitochondrial ribosome (mitoribosome), a dedicated translation machinery responsible for the synthesis of mitochondrial genome-encoded proteins, including at least some of the essential transmembrane subunits of the mitochondrial respiratory chain. The mitoribosomes are attached to the mitochondrial inner membrane and translation products are cotranslationally integrated into the membrane. The chain is Large ribosomal subunit protein mL38 (MRPL35) from Saccharomyces cerevisiae (strain ATCC 204508 / S288c) (Baker's yeast).